A 278-amino-acid polypeptide reads, in one-letter code: Dermonecrotic toxin LlSicTox-alphaIII3ii (278 aa).

His5 is a catalytic residue. Positions 25 and 27 each coordinate Mg(2+). The Nucleophile role is filled by His40. A disulfide bridge connects residues Cys44 and Cys50. Asp84 lines the Mg(2+) pocket.

It belongs to the arthropod phospholipase D family. Class I subfamily. Mg(2+) is required as a cofactor. As to expression, expressed by the venom gland.

It is found in the secreted. The catalysed reaction is an N-(acyl)-sphingosylphosphocholine = an N-(acyl)-sphingosyl-1,3-cyclic phosphate + choline. It catalyses the reaction an N-(acyl)-sphingosylphosphoethanolamine = an N-(acyl)-sphingosyl-1,3-cyclic phosphate + ethanolamine. It carries out the reaction a 1-acyl-sn-glycero-3-phosphocholine = a 1-acyl-sn-glycero-2,3-cyclic phosphate + choline. The enzyme catalyses a 1-acyl-sn-glycero-3-phosphoethanolamine = a 1-acyl-sn-glycero-2,3-cyclic phosphate + ethanolamine. In terms of biological role, dermonecrotic toxins cleave the phosphodiester linkage between the phosphate and headgroup of certain phospholipids (sphingolipid and lysolipid substrates), forming an alcohol (often choline) and a cyclic phosphate. This toxin acts on sphingomyelin (SM). It may also act on ceramide phosphoethanolamine (CPE), lysophosphatidylcholine (LPC) and lysophosphatidylethanolamine (LPE), but not on lysophosphatidylserine (LPS), and lysophosphatidylglycerol (LPG). It acts by transphosphatidylation, releasing exclusively cyclic phosphate products as second products. Induces dermonecrosis, hemolysis, increased vascular permeability, edema, inflammatory response, and platelet aggregation. This is Dermonecrotic toxin LlSicTox-alphaIII3ii from Loxosceles laeta (South American recluse spider).